We begin with the raw amino-acid sequence, 796 residues long: N-terminal acetyltransferase B complex subunit MDM20 (796 aa).

An N-acetylserine modification is found at serine 2.

The protein belongs to the MDM20/NAA25 family. In terms of assembly, component of the N-terminal acetyltransferase B (NatB) complex, which is composed of NAT3 and MDM20.

The protein localises to the cytoplasm. Its function is as follows. Non-catalytic subunit of the NatB N-terminal acetyltransferase, which catalyzes acetylation of the amino-terminal methionine residues of all proteins beginning with Met-Asp or Met-Glu and of some proteins beginning with Met-Asn or Met-Met. NatB acetylates TPM1 protein and regulates tropomyocin-actin interactions. MDM20 is required for mitochondrial inheritance during budding and together with TPM1, is essential for the integrity and assembly of actin cables. Genetically interacts with CIN8. This chain is N-terminal acetyltransferase B complex subunit MDM20 (MDM20), found in Saccharomyces cerevisiae (strain ATCC 204508 / S288c) (Baker's yeast).